Consider the following 391-residue polypeptide: Casein kinase II subunit alpha (391 aa).

The interval 36-41 is interaction with beta subunit; that stretch reads QDDYQL. The Protein kinase domain maps to 39–324; sequence YQLVRKLGRG…AREAMEHPYF (286 aa). ATP contacts are provided by residues 45–53 and Lys-68; that span reads LGRGKYSEV. Asp-156 (proton acceptor) is an active-site residue. A phosphothreonine; by CDK1 mark is found at Thr-344 and Thr-360. 2 positions are modified to phosphoserine; by CDK1: Ser-362 and Ser-370.

The protein belongs to the protein kinase superfamily. Ser/Thr protein kinase family. CK2 subfamily. Heterotetramer composed of two catalytic subunits (alpha chain and/or alpha' chain) and two regulatory subunits (beta chains). The tetramer can exist as a combination of 2 alpha/2 beta, 2 alpha'/2 beta or 1 alpha/1 alpha'/2 beta subunits. Also part of a CK2-SPT16-SSRP1 complex composed of SSRP1, SUPT16H, CSNK2A1, CSNK2A2 and CSNK2B, which forms following UV irradiation. Interacts with RNPS1. Interacts with SNAI1. Interacts with PML. Interacts with CCAR2. Interacts with HIRIP3. Phosphorylated at Thr-344, Thr-360, Ser-362 and Ser-370 by CDK1 in prophase and metaphase and dephosphorylated during anaphase. Phosphorylation does not directly affect casein kinase 2 activity, but may contribute to its regulation by forming binding sites for interacting proteins and/or targeting it to different compartments.

It is found in the nucleus. The enzyme catalyses L-seryl-[protein] + ATP = O-phospho-L-seryl-[protein] + ADP + H(+). It carries out the reaction L-threonyl-[protein] + ATP = O-phospho-L-threonyl-[protein] + ADP + H(+). Its activity is regulated as follows. Constitutively active protein kinase whose activity is not directly affected by phosphorylation. Seems to be regulated by level of expression and localization. Its function is as follows. Catalytic subunit of a constitutively active serine/threonine-protein kinase complex that phosphorylates a large number of substrates containing acidic residues C-terminal to the phosphorylated serine or threonine. Regulates numerous cellular processes, such as cell cycle progression, apoptosis and transcription, as well as viral infection. May act as a regulatory node which integrates and coordinates numerous signals leading to an appropriate cellular response. During mitosis, functions as a component of the p53/TP53-dependent spindle assembly checkpoint (SAC) that maintains cyclin-B-CDK1 activity and G2 arrest in response to spindle damage. Also required for p53/TP53-mediated apoptosis, phosphorylating 'Ser-392' of p53/TP53 following UV irradiation. Phosphorylates a number of DNA repair proteins in response to DNA damage, such as MDC1, MRE11, RAD9A, RAD51 and HTATSF1, promoting their recruitment to DNA damage sites. Can also negatively regulate apoptosis. Phosphorylates the caspases CASP9 and CASP2 and the apoptotic regulator NOL3. Phosphorylation protects CASP9 from cleavage and activation by CASP8, and inhibits the dimerization of CASP2 and activation of CASP8. Phosphorylates YY1, protecting YY1 from cleavage by CASP7 during apoptosis. Regulates transcription by direct phosphorylation of RNA polymerases I, II, III and IV. Also phosphorylates and regulates numerous transcription factors including NF-kappa-B, STAT1, CREB1, IRF1, IRF2, ATF1, ATF4, SRF, MAX, JUN, FOS, MYC and MYB. Phosphorylates Hsp90 and its co-chaperones FKBP4 and CDC37, which is essential for chaperone function. Mediates sequential phosphorylation of FNIP1, promoting its gradual interaction with Hsp90, leading to activate both kinase and non-kinase client proteins of Hsp90. Regulates Wnt signaling by phosphorylating CTNNB1 and the transcription factor LEF1. Acts as an ectokinase that phosphorylates several extracellular proteins. Phosphorylates PML at 'Ser-565' and primes it for ubiquitin-mediated degradation. Plays an important role in the circadian clock function by phosphorylating BMAL1 at 'Ser-90' which is pivotal for its interaction with CLOCK and which controls CLOCK nuclear entry. Phosphorylates FMR1, promoting FMR1-dependent formation of a membraneless compartment. May phosphorylate histone H2A on 'Ser-1'. The sequence is that of Casein kinase II subunit alpha (Csnk2a1) from Rattus norvegicus (Rat).